Consider the following 549-residue polypeptide: Arginine--tRNA ligase (549 aa).

A 'HIGH' region motif is present at residues 132–142 (ANPTGPLHIGH).

It belongs to the class-I aminoacyl-tRNA synthetase family. As to quaternary structure, monomer.

The protein localises to the cytoplasm. The catalysed reaction is tRNA(Arg) + L-arginine + ATP = L-arginyl-tRNA(Arg) + AMP + diphosphate. In Paenarthrobacter aurescens (strain TC1), this protein is Arginine--tRNA ligase.